We begin with the raw amino-acid sequence, 378 residues long: Lactosylceramide 1,3-N-acetyl-beta-D-glucosaminyltransferase (378 aa).

The Cytoplasmic portion of the chain corresponds to Met-1–Gln-14. A helical; Signal-anchor for type II membrane protein membrane pass occupies residues Leu-15–Ile-35. Topologically, residues Asp-36–Ile-378 are lumenal. Asn-59 carries an N-linked (GlcNAc...) asparagine glycan.

Belongs to the glycosyltransferase 31 family. As to expression, widely expressed. Highly expressed in lung, colon, placenta, testis, pituitary gland and cerebellum. Weakly expressed in brain, liver, spleen, lymph node and thymus.

It localises to the golgi apparatus membrane. It catalyses the reaction a beta-D-Gal-(1-&gt;4)-beta-D-Glc-(1&lt;-&gt;1)-Cer(d18:1(4E)) + UDP-N-acetyl-alpha-D-glucosamine = a beta-D-GlcNAc-(1-&gt;3)-beta-D-Gal-(1-&gt;4)-beta-D-Glc-(1&lt;-&gt;1)-Cer(d18:1(4E)) + UDP + H(+). The catalysed reaction is a neolactoside nLc4Cer(d18:1(4E)) + UDP-N-acetyl-alpha-D-glucosamine = a neolactoside IV(3)-beta-GlcNAc-nLc4Cer(d18:1(4E)) + UDP + H(+). It functions in the pathway protein modification; protein glycosylation. Its function is as follows. Beta-1,3-N-acetylglucosaminyltransferase that plays a key role in the synthesis of lacto- or neolacto-series carbohydrate chains on glycolipids, notably by participating in biosynthesis of HNK-1 and Lewis X carbohydrate structures. Has strong activity toward lactosylceramide (LacCer) and neolactotetraosylceramide (nLc(4)Cer; paragloboside), resulting in the synthesis of Lc(3)Cer and neolactopentaosylceramide (nLc(5)Cer), respectively. Probably plays a central role in regulating neolacto-series glycolipid synthesis during embryonic development. The protein is Lactosylceramide 1,3-N-acetyl-beta-D-glucosaminyltransferase of Homo sapiens (Human).